Reading from the N-terminus, the 2183-residue chain is Genome polyprotein (2183 aa).

A lipid anchor (N-myristoyl glycine; by host) is attached at glycine 2. The Cytoplasmic portion of the chain corresponds to 2–1493 (GAQVSTQKTG…HVSRAFICLQ (1492 aa)). The tract at residues 566 to 582 (FYQGPTEESVERAMGRV) is amphipathic alpha-helix. Catalysis depends on for protease 2A activity residues histidine 870 and aspartate 888. 2 residues coordinate Zn(2+): cysteine 905 and cysteine 907. Cysteine 959 functions as the For protease 2A activity in the catalytic mechanism. Zn(2+)-binding residues include cysteine 965 and histidine 967. The interval 1099–1171 (NNNWLKKFTE…EQSAPSQSDQ (73 aa)) is membrane-binding. The interval 1099 to 1237 (NNNWLKKFTE…SPGAGKSVAT (139 aa)) is oligomerization. The interval 1120–1124 (AVKIQ) is RNA-binding. The region spanning 1203 to 1359 (EKKMSNYIQF…SMYSQNGKIN (157 aa)) is the SF3 helicase domain. Zn(2+) is bound by residues cysteine 1367, cysteine 1379, and cysteine 1384. The C4-type; degenerate zinc finger occupies 1367–1384 (CDEECCPVNFKKCCPLVC). Positions 1411 to 1418 (EYNHRHSV) are RNA-binding. The oligomerization stretch occupies residues 1422–1427 (LEALFQ). An intramembrane segment occupies 1494–1509 (ALTTFVSVAGIIYIIY). At 1510–2183 (KLFAGFQGAY…TLRRKWLDAF (674 aa)) the chain is on the cytoplasmic side. Tyrosine 1519 carries the O-(5'-phospho-RNA)-tyrosine modification. Residues 1539–1717 (GPAFEFAVAM…FSASLLRHYF (179 aa)) enclose the Peptidase C3 domain. Residues histidine 1578, glutamate 1609, and cysteine 1685 each act as for protease 3C activity in the active site. Positions 1948-2064 (GHLRAFDYSG…SYPLPIDASL (117 aa)) constitute a RdRp catalytic domain. Aspartate 1954 and aspartate 2050 together coordinate Mg(2+).

The protein belongs to the picornaviruses polyprotein family. As to quaternary structure, interacts with capsid protein VP1 and capsid protein VP3 to form heterotrimeric protomers. In terms of assembly, interacts with capsid protein VP0, and capsid protein VP3 to form heterotrimeric protomers. Five protomers subsequently associate to form pentamers which serve as building blocks for the capsid. Interacts with capsid protein VP2, capsid protein VP3 and capsid protein VP4 following cleavage of capsid protein VP0. Interacts with host CXADR. Interacts with capsid protein VP1 and capsid protein VP3 in the mature capsid. As to quaternary structure, interacts with capsid protein VP0 and capsid protein VP1 to form heterotrimeric protomers. Five protomers subsequently associate to form pentamers which serve as building blocks for the capsid. Interacts with capsid protein VP4 in the mature capsid. Interacts with protein 2C; this interaction may be important for virion morphogenesis. In terms of assembly, interacts with capsid protein VP1 and capsid protein VP3. Homodimer. As to quaternary structure, homohexamer; forms a hexameric ring structure with 6-fold symmetry characteristic of AAA+ ATPases. Interacts (via N-terminus) with host RTN3 (via reticulon domain); this interaction is important for viral replication. Interacts with capsid protein VP3; this interaction may be important for virion morphogenesis. In terms of assembly, interacts with protein 3CD. Homodimer. Interacts with host GBF1. Interacts (via GOLD domain) with host ACBD3 (via GOLD domain); this interaction allows the formation of a viral protein 3A/ACBD3 heterotetramer with a 2:2 stoichiometry, which will stimulate the recruitment of host PI4KB in order to synthesize PI4P at the viral RNA replication sites. As to quaternary structure, interacts with RNA-directed RNA polymerase. In terms of assembly, interacts with protein 3AB and with RNA-directed RNA polymerase. Interacts with Viral protein genome-linked and with protein 3CD. Mg(2+) is required as a cofactor. In terms of processing, specific enzymatic cleavages in vivo by the viral proteases yield processing intermediates and the mature proteins. Myristoylation is required for the formation of pentamers during virus assembly. Further assembly of 12 pentamers and a molecule of genomic RNA generates the provirion. Post-translationally, during virion maturation, immature virions are rendered infectious following cleavage of VP0 into VP4 and VP2. This maturation seems to be an autocatalytic event triggered by the presence of RNA in the capsid and it is followed by a conformational change infectious virion. In terms of processing, myristoylation is required during RNA encapsidation and formation of the mature virus particle. VPg is uridylylated by the polymerase into VPg-pUpU. This acts as a nucleotide-peptide primer for the genomic RNA replication.

It localises to the virion. The protein resides in the host cytoplasm. It is found in the host cytoplasmic vesicle membrane. The protein localises to the host nucleus. It catalyses the reaction a ribonucleoside 5'-triphosphate + H2O = a ribonucleoside 5'-diphosphate + phosphate + H(+). The enzyme catalyses Selective cleavage of Tyr-|-Gly bond in the picornavirus polyprotein.. The catalysed reaction is RNA(n) + a ribonucleoside 5'-triphosphate = RNA(n+1) + diphosphate. It carries out the reaction Selective cleavage of Gln-|-Gly bond in the poliovirus polyprotein. In other picornavirus reactions Glu may be substituted for Gln, and Ser or Thr for Gly.. With respect to regulation, replication or transcription is subject to high level of random mutations by the nucleotide analog ribavirin. Its function is as follows. Forms an icosahedral capsid of pseudo T=3 symmetry with capsid proteins VP2 and VP3. The capsid is 300 Angstroms in diameter, composed of 60 copies of each capsid protein and enclosing the viral positive strand RNA genome. Capsid protein VP1 mainly forms the vertices of the capsid. Capsid protein VP1 interacts with host CXADR to provide virion attachment to target host cells. This attachment induces virion internalization. Tyrosine kinases are probably involved in the entry process. After binding to its receptor, the capsid undergoes conformational changes. Capsid protein VP1 N-terminus (that contains an amphipathic alpha-helix) and capsid protein VP4 are externalized. Together, they shape a pore in the host membrane through which viral genome is translocated to host cell cytoplasm. Functionally, forms an icosahedral capsid of pseudo T=3 symmetry with capsid proteins VP2 and VP3. The capsid is 300 Angstroms in diameter, composed of 60 copies of each capsid protein and enclosing the viral positive strand RNA genome. In terms of biological role, lies on the inner surface of the capsid shell. After binding to the host receptor, the capsid undergoes conformational changes. Capsid protein VP4 is released, Capsid protein VP1 N-terminus is externalized, and together, they shape a pore in the host membrane through which the viral genome is translocated into the host cell cytoplasm. Component of immature procapsids, which is cleaved into capsid proteins VP4 and VP2 after maturation. Allows the capsid to remain inactive before the maturation step. Its function is as follows. Cysteine protease that cleaves viral polyprotein and specific host proteins. It is responsible for the autocatalytic cleavage between the P1 and P2 regions, which is the first cleavage occurring in the polyprotein. Also cleaves the host translation initiation factor EIF4G1, in order to shut down the capped cellular mRNA translation. Inhibits the host nucleus-cytoplasm protein and RNA trafficking by cleaving host members of the nuclear pores. Counteracts stress granule formation probably by antagonizing its assembly or promoting its dissassembly. Cleaves and inhibits host IFIH1/MDA5, thereby inhibiting the type-I IFN production and the establishment of the antiviral state. Cleaves and inhibits host MAVS, thereby inhibiting the type-I IFN production and the establishment of the antiviral state. Functionally, plays an essential role in the virus replication cycle by acting as a viroporin. Creates a pore in the host endoplasmic reticulum and as a consequence releases Ca2+ in the cytoplasm of infected cell. In turn, high levels of cytoplasmic calcium may trigger membrane trafficking and transport of viral ER-associated proteins to viroplasms, sites of viral genome replication. In terms of biological role, induces and associates with structural rearrangements of intracellular membranes. Displays RNA-binding, nucleotide binding and NTPase activities. May play a role in virion morphogenesis and viral RNA encapsidation by interacting with the capsid protein VP3. Localizes the viral replication complex to the surface of membranous vesicles. Together with protein 3CD binds the Cis-Active RNA Element (CRE) which is involved in RNA synthesis initiation. Acts as a cofactor to stimulate the activity of 3D polymerase, maybe through a nucleid acid chaperone activity. Its function is as follows. Localizes the viral replication complex to the surface of membranous vesicles. It inhibits host cell endoplasmic reticulum-to-Golgi apparatus transport and causes the disassembly of the Golgi complex, possibly through GBF1 interaction. This would result in depletion of MHC, trail receptors and IFN receptors at the host cell surface. Plays an essential role in viral RNA replication by recruiting ACBD3 and PI4KB at the viral replication sites, thereby allowing the formation of the rearranged membranous structures where viral replication takes place. Functionally, acts as a primer for viral RNA replication and remains covalently bound to viral genomic RNA. VPg is uridylylated prior to priming replication into VPg-pUpU. The oriI viral genomic sequence may act as a template for this. The VPg-pUpU is then used as primer on the genomic RNA poly(A) by the RNA-dependent RNA polymerase to replicate the viral genome. During genome replication, the VPg-RNA linkage is removed by the host TDP2, thereby accelerating replication. During the late stage of the replication cycle, host TDP2 is excluded from sites of viral RNA synthesis and encapsidation, allowing for the generation of progeny virions. In terms of biological role, involved in the viral replication complex and viral polypeptide maturation. It exhibits protease activity with a specificity and catalytic efficiency that is different from protease 3C. Protein 3CD lacks polymerase activity. Protein 3CD binds to the 5'UTR of the viral genome. Replicates the viral genomic RNA on the surface of intracellular membranes. May form linear arrays of subunits that propagate along a strong head-to-tail interaction called interface-I. Covalently attaches UMP to a tyrosine of VPg, which is used to prime RNA synthesis. The positive stranded RNA genome is first replicated at virus induced membranous vesicles, creating a dsRNA genomic replication form. This dsRNA is then used as template to synthesize positive stranded RNA genomes. ss(+)RNA genomes are either translated, replicated or encapsidated. Its function is as follows. Major viral protease that mediates proteolytic processing of the polyprotein. Cleaves host EIF5B, contributing to host translation shutoff. Also cleaves host PABPC1, contributing to host translation shutoff. Cleaves host NLRP1, triggers host N-glycine-mediated degradation of the autoinhibitory NLRP1 N-terminal fragment. The chain is Genome polyprotein from Coxsackievirus B4 (strain E2).